Reading from the N-terminus, the 287-residue chain is ATP synthase gamma chain (287 aa).

It belongs to the ATPase gamma chain family. F-type ATPases have 2 components, CF(1) - the catalytic core - and CF(0) - the membrane proton channel. CF(1) has five subunits: alpha(3), beta(3), gamma(1), delta(1), epsilon(1). CF(0) has three main subunits: a, b and c.

It localises to the cell inner membrane. Produces ATP from ADP in the presence of a proton gradient across the membrane. The gamma chain is believed to be important in regulating ATPase activity and the flow of protons through the CF(0) complex. The chain is ATP synthase gamma chain from Alkalilimnicola ehrlichii (strain ATCC BAA-1101 / DSM 17681 / MLHE-1).